Consider the following 720-residue polypeptide: Probable GTPase-activating protein GYL1 (720 aa).

Met1 is subject to N-acetylmethionine. The span at 1-52 (MNSNEDIHEERIEVPRTPHQTQPEKDSDRIALRDEISVPEGDEKAYSDEKVE) shows a compositional bias: basic and acidic residues. The disordered stretch occupies residues 1 to 132 (MNSNEDIHEE…TSPPLPPRAD (132 aa)). Thr17 carries the phosphothreonine modification. Ser37 bears the Phosphoserine mark. The span at 54–66 (ATTNASSNFGSNE) shows a compositional bias: polar residues. Residue Ser73 is modified to Phosphoserine. The span at 95–108 (SKTILPSDDLSQQL) shows a compositional bias: polar residues. Basic and acidic residues predominate over residues 111–120 (EESKVEEALK). Ser139 is modified (phosphoserine). 2 disordered regions span residues 144–164 (SLPP…RPQL) and 179–210 (APHG…PRRI). Polar residues predominate over residues 184–196 (ATPSKSPTSAVGN). Positions 297 to 477 (GIPAAYRLVV…RIGDMVFLEG (181 aa)) constitute a Rab-GAP TBC domain. A Glycyl lysine isopeptide (Lys-Gly) (interchain with G-Cter in SUMO) cross-link involves residue Lys498. The stretch at 572 to 696 (QYKSITEKNL…EIKTANKNGT (125 aa)) forms a coiled coil.

It belongs to the GYP5 family. As to quaternary structure, interacts with GYP5 and RVS167. Is part of SEC4-containing complexes.

The protein resides in the cytoplasm. It is found in the bud. The protein localises to the bud neck. In terms of biological role, probable GTPase-activating protein which stimulates the GTP hydrolysis rate by GYP5 of YPT1 and SEC4. Involved in ER to Golgi trafficking and polarized exocytosis. The sequence is that of Probable GTPase-activating protein GYL1 (GYL1) from Saccharomyces cerevisiae (strain ATCC 204508 / S288c) (Baker's yeast).